We begin with the raw amino-acid sequence, 125 residues long: Putative zinc finger A20 and AN1 domain-containing stress-associated protein 8 (125 aa).

An A20-type zinc finger spans residues 2–36 (TGEPSLCIRGCGFFSTSQTKNLCSKCYNDFLKDES). Residues Cys-8, Cys-12, Cys-24, Cys-27, Cys-80, Cys-82, His-96, and Cys-98 each contribute to the Zn(2+) site. The AN1-type; degenerate zinc-finger motif lies at 61 to 106 (LGSKGGCACKKKVGLLGFHCRCGHLFFASHRYPEEHSCPSDYKSAA).

Functionally, may be involved in environmental stress response. The protein is Putative zinc finger A20 and AN1 domain-containing stress-associated protein 8 (SAP8) of Arabidopsis thaliana (Mouse-ear cress).